We begin with the raw amino-acid sequence, 502 residues long: RNA-splicing ligase RtcB homolog 2 (502 aa).

The Mn(2+) site is built by Asp120, Cys123, His228, His260, and His354. 227–231 (NHYAE) contributes to the GMP binding site. GMP is bound by residues 354 to 355 (HN), 403 to 406 (GGSM), Ser410, and 429 to 432 (HGAG). The active-site GMP-histidine intermediate is the His429.

It belongs to the RtcB family. As to quaternary structure, catalytic component of the tRNA-splicing ligase complex. Requires Mn(2+) as cofactor.

It carries out the reaction a 3'-end 3'-phospho-ribonucleotide-RNA + a 5'-end dephospho-ribonucleoside-RNA + GTP = a ribonucleotidyl-ribonucleotide-RNA + GMP + diphosphate. The enzyme catalyses a 3'-end 2',3'-cyclophospho-ribonucleotide-RNA + a 5'-end dephospho-ribonucleoside-RNA + GTP + H2O = a ribonucleotidyl-ribonucleotide-RNA + GMP + diphosphate + H(+). In terms of biological role, catalytic subunit of the tRNA-splicing ligase complex that acts by directly joining spliced tRNA halves to mature-sized tRNAs by incorporating the precursor-derived splice junction phosphate into the mature tRNA as a canonical 3',5'-phosphodiester. May act as an RNA ligase with broad substrate specificity, and may function toward other RNAs. This Culex quinquefasciatus (Southern house mosquito) protein is RNA-splicing ligase RtcB homolog 2.